Here is a 160-residue protein sequence, read N- to C-terminus: Salivary gland broad-spectrum antiviral protein (160 aa).

A helical membrane pass occupies residues 17–37; sequence VALGLYFTVVVFVLFITSVNL. Residues asparagine 62 and asparagine 145 are each glycosylated (N-linked (GlcNAc...) asparagine).

In terms of tissue distribution, salivary gland (at protein level).

It localises to the membrane. (Microbial infection) Modulates replication of Zika virus in salivary glands. In terms of biological role, (Microbial infection) Modulates replication of dengue virus type 2 in salivary glands. Its function is as follows. (Microbial infection) Modulates replication of chikungunya virus in salivary glands. In Aedes aegypti (Yellowfever mosquito), this protein is Salivary gland broad-spectrum antiviral protein.